We begin with the raw amino-acid sequence, 257 residues long: Small ribosomal subunit protein uS2 (257 aa).

Belongs to the universal ribosomal protein uS2 family.

This chain is Small ribosomal subunit protein uS2, found in Bartonella quintana (strain Toulouse) (Rochalimaea quintana).